Reading from the N-terminus, the 66-residue chain is Large ribosomal subunit protein uL29 (66 aa).

It belongs to the universal ribosomal protein uL29 family.

The protein is Large ribosomal subunit protein uL29 of Francisella tularensis subsp. holarctica (strain LVS).